The chain runs to 4085 residues: MACNRVTLAVASDSEISANGCSTIAQAVRRYSEAASNGFRACRFVSLDLQDCIVGIADDTYVMGLHGNQTLFCNIMKFSDRPFMLHGWLVFSNSNYLLEEFDVVFGKRGGGNVTYTDQYLCGADGKPVMSEDLWQFVDHFGENEEIIINGHTYVCAWLTKRKPLDYKRQNNLAIEEIEYVHGDALHTLRNGSVLEMAKEVKTSSKVVLSDALDKLYKVFGSPVMTNGSNILEAFTKPVFISALVQCTCGTKSWSVGDWTGFKSSCCNVISNKLCVVPGNVKPGDAVITTQQAGAGIKYFCGMTLKFVANIEGVSVWRVIALQSVDCFVASSTFVEEEHVNRMDTFCFNVRNSVTDECRLAMLGAEMTSNVRRQVASGVIDISTGWFDVYDDIFAESKPWFVRKAEDIFGPCWSALASALKQLKVTTGELVRFVKSICNSAVAVVGGTIQILASVPEKFLNAFDVFVTAIQTVFDCAVETCTIAGKAFDKVFDYVLLDNALVKLVTTKLKGVRERGLNKVKYATVVVGSTEEVKSSRVERSTAVLTIANNYSKLFDEGYTVVIGDVAYFVSDGYFRLMASPNSVLTTAVYKPLFAFNVNVMGTRPEKFPTTVTCENLESAVLFVNDKITEFQLDYSIDVIDNEIIVKPNISLCVPLYVRDYVDKWDDFCRQYSNESWFEDDYRAFISVLDITDAAVKAAESKAFVDTIVPPCPSILKVIDGGKIWNGVIKNVNSVRDWLKSLKLNLTQQGLLGTCAKRFKRWLGILLEAYNAFLDTVVSTVKIGGLTFKTYAFDKPYIVIRDIVCKVENKTEAEWIELFPHNDRIKSFSTFESAYMPIADPTHFDIEEVELLDAEFVEPGCGGILAVIDEHVFYKKDGVYYPSNGTNILPVAFTKAAGGKVSFSDDVEVKDIEPVYRVKLCFEFEDEKLVDVCEKAIGKKIKHEGDWDSFCKTIQSALSVVSCYVNLPTYYIYDEEGGNDLSLPVMISEWPLSVQQAQQEATLPDIAEDVVDQVEEVNSIFDIETVDVKHDVSPFEMPFEELNGLKILKQLDNNCWVNSVMLQIQLTGILDGDYAMQFFKMGRVAKMIERCYTAEQCIRGAMGDVGLCMYRLLKDLHTGFMVMDYKCSCTSGRLEESGAVLFCTPTKKAFPYGTCLNCNAPRMCTIRQLQGTIIFVQQKPEPVNPVSFVVKPVCSSIFRGAVSCGHYQTNIYSQNLCVDGFGVNKIQPWTNDALNTICIKDADYNAKVEISVTPIKNTVDTTPKEEFVVKEKLNAFLVHDNVAFYQGDVDTVVNGVDFDFIVNAANENLAHGGGLAKALDVYTKGKLQRLSKEHIGLAGKVKVGTGVMVECDSLRIFNVVGPRKGKHERDLLIKAYNTINNEQGTPLTPILSCGIFGIKLETSLEVLLDVCNTKEVKVFVYTDTEVCKVKDFVSGLVNVQKVEQPKIEPKPVSVIKVAPKPYRVDGKFSYFTEDLLCVADDKPIVLFTDSMLTLDDRGLALDNALSGVLSAAIKDCVDINKAIPSGNLIKFDIGSVVVYMCVVPSEKDKHLDNNVQRCTRKLNRLMCDIVCTIPADYILPLVLSSLTCNVSFVGELKAAEAKVITIKVTEDGVNVHDVTVTTDKSFEQQVGVIADKDKDLSGAVPSDLNTSELLTKAIDVDWVEFYGFKDAVTFATVDHSAFAYESAVVNGIRVLKTSDNNCWVNAVCIALQYSKPHFISQGLDAAWNKFVLGDVEIFVAFVYYVARLMKGDKGDAEDTLTKLSKYLANEAQVQLEHYSSCVECDAKFKNSVASINSAIVCASVKRDGVQVGYCVHGIKYYSRVRSVRGRAIIVSVEQLEPCAQSRLLSGVAYTAFSGPVDKGHYTVYDTAKKSMYDGDRFVKHDLSLLSVTSVVMVGGYVAPVNTVKPKPVINQLDEKAQKFFDFGDFLIHNFVIFFTWLLSMFTLCKTAVTTGDVKIMAKAPQRTGVVLKRSLKYNLKASAAVLKSKWWLLAKFTKLLLLIYTLYSVVLLCVRFGPFNFCSETVNGYAKSNFVKDDYCDGSLGCKMCLFGYQELSQFSHLDVVWKHITDPLFSNMQPFIVMVLLLIFGDNYLRCFLLYFVAQMISTVGVFLGYKETNWFLHFIPFDVICDELLVTVIVIKVISFVRHVLFGCENPDCIACSKSARLKRFPVNTIVNGVQRSFYVNANGGSKFCKKHRFFCVDCDSYGYGSTFITPEVSRELGNITKTNVQPTGPAYVMIDKVEFENGFYRLYSCETFWRYNFDITESKYSCKEVFKNCNVLDDFIVFNNNGTNVTQVKNASVYFSQLLCRPIKLVDSELLSTLSVDFNGVLHKAYIDVLRNSFGKDLNANMSLAECKRALGLSISDHEFTSAISNAHRCDVLLSDLSFNNFVSSYAKPEEKLSAYDLACCMRAGAKVVNANVLTKDQTPIVWHAKDFNSLSAEGRKYIVKTSKAKGLTFLLTINENQAVTQIPATSIVAKQGAGDAGHSLTWLWLLCGLVCLIQFYLCFFMPYFMYDIVSSFEGYDFKYIENGQLKNFEAPLKCVRNVFENFEDWHYAKFGFTPLNKQSCPIVVGVSEIVNTVAGIPSNVYLVGKTLIFTLQAAFGNAGVCYDIFGVTTPEKCIFTSACTRLEGLGGNNVYCYNTALMEGSLPYSSIQANAYYKYDNGNFIKLPEVIAQGFGFRTVRTIATKYCRVGECVESNAGVCFGFDKWFVNDGRVANGYVCGTGLWNLVFNILSMFSSSFSVAAMSGQILLNCALGAFAIFCCFLVTKFRRMFGDLSVGVCTVVVAVLLNNVSYIVTQNLVTMIAYAILYFFATRSLRYAWIWCAAYLIAYISFAPWWLCAWYFLAMLTGLLPSLLKLKVSTNLFEGDKFVGTFESAAAGTFVIDMRSYEKLANSISPEKLKSYAASYNRYKYYSGNANEADYRCACYAYLAKAMLDFSRDHNDILYTPPTVSYGSTLQAGLRKMAQPSGFVEKCVVRVCYGNTVLNGLWLGDIVYCPRHVIASNTTSAIDYDHEYSIMRLHNFSIISGTAFLGVVGATMHGVTLKIKVSQTNMHTPRHSFRTLKSGEGFNILACYDGCAQGVFGVNMRTNWTIRGSFINGACGSPGYNLKNGEVEFVYMHQIELGSGSHVGSSFDGVMYGGFEDQPNLQVESANQMLTVNVVAFLYAAILNGCTWWLKGEKLFVEHYNEWAQANGFTAMNGEDAFSILAAKTGVCVERLLHAIQVLNNGFGGKQILGYSSLNDEFSINEVVKQMFGVNLQSGKTTSMFKSISLFAGFFVMFWAELFVYTTTIWVNPGFLTPFMILLVALSLCLTFVVKHKVLFLQVFLLPSIIVAAIQNCAWDYHVTKVLAEKFDYNVSVMQMDIQGFVNIFICLFVALLHTWRFAKERCTHWCTYLFSLIAVLYTALYSYDYVSLLVMLLCAISNEWYIGAIIFRICRFGVAFLPVEYVSYFDGVKTVLLFYMLLGFVSCMYYGLLYWINRFCKCTLGVYDFCVSPAEFKYMVANGLNAPNGPFDALFLSFKLMGIGGPRTIKVSTVQSKLTDLKCTNVVLMGILSNMNIASNSKEWAYCVEMHNKINLCDDPETAQELLLALLAFFLSKHSDFGLGDLVDSYFENDSILQSVASSFVGMPSFVAYETARQEYENAVANGSSPQIIKQLKKAMNVAKAEFDRESSVQKKINRMAEQAAAAMYKEARAVNRKSKVVSAMHSLLFGMLRRLDMSSVDTILNMARNGVVPLSVIPATSAARLVVVVPDHDSFVKMMVDGFVHYAGVVWTLQEVKDNDGKNVHLKDVTKENQEILVWPLILTCERVVKLQNNEIMPGKMKVKATKGEGDGGITSEGNALYNNEGGRAFMYAYVTTKPGMKYVKWEHDSGVVTVELEPPCRFVIDTPTGPQIKYLYFVKNLNNLRRGAVLGYIGATVRLQAGKQTEFVSNSHLLTHCSFAVDPAAAYLDAVKQGAKPVGNCVKMLTNGSGSGQAITCTIDSNTTQDTYGGASVCIYCRAHVAHPTMDGFCQYKGKWVQVPIGTNDPIRFCLENTVCKVCGCWLNHGCTCDRTAIQSFDNSYLNESGALVPLD.

The CoV Nsp1 globular domain occupies 2-109; that stretch reads ACNRVTLAVA…EFDVVFGKRG (108 aa). The 247-residue stretch at 113 to 359 folds into the CoV Nsp2 N-terminal domain; that stretch reads VTYTDQYLCG…RNSVTDECRL (247 aa). Zn(2+) is bound by residues cysteine 246, cysteine 248, cysteine 265, and cysteine 266. The tract at residues 246-266 is C4; sequence CTCGTKSWSVGDWTGFKSSCC. In terms of domain architecture, CoV Nsp2 middle spans 389 to 775; it reads YDDIFAESKP…LEAYNAFLDT (387 aa). The CoV Nsp2 C-terminal domain occupies 773-897; sequence LDTVVSTVKI…LPVAFTKAAG (125 aa). Residues 898–993 form the Ubiquitin-like 1 domain; it reads GKVSFSDDVE…VMISEWPLSV (96 aa). The Peptidase C16 1 domain occupies 1016-1268; it reads VNSIFDIETV…DTTPKEEFVV (253 aa). Cysteine 1054 (for PL1-PRO activity) is an active-site residue. A C4-type 1; degenerate zinc finger spans residues 1126 to 1157; that stretch reads CSCTSGRLEESGAVLFCTPTKKAFPYGTCLNC. Residues histidine 1205 and aspartate 1218 each act as for PL1-PRO activity in the active site. The Macro domain maps to 1269–1436; sequence KEKLNAFLVH…KVKDFVSGLV (168 aa). In terms of domain architecture, Ubiquitin-like 2 spans 1600 to 1655; sequence AKVITIKVTEDGVNVHDVTVTTDKSFEQQVGVIADKDKDLSGAVPSDLNTSELLTK. The Peptidase C16 2 domain maps to 1663–1914; that stretch reads EFYGFKDAVT…TVKPKPVINQ (252 aa). Residue cysteine 1701 is the For PL2-PRO activity of the active site. The Zn(2+) site is built by cysteine 1780, cysteine 1783, cysteine 1813, and histidine 1815. A C4-type 2; atypical zinc finger spans residues 1780–1815; the sequence is CVECDAKFKNSVASINSAIVCASVKRDGVQVGYCVH. Active-site for PL2-PRO activity residues include histidine 1863 and aspartate 1868. Residues 1925-2115 form an HD1 region; sequence FGDFLIHNFV…STVGVFLGYK (191 aa). A helical transmembrane segment spans residues 1998-2018; that stretch reads LLLLIYTLYSVVLLCVRFGPF. The 3Ecto domain maps to 2005-2070; the sequence is LYSVVLLCVR…LDVVWKHITD (66 aa). Intrachain disulfides connect cysteine 2021/cysteine 2048 and cysteine 2039/cysteine 2045. A run of 2 helical transmembrane segments spans residues 2068 to 2088 and 2095 to 2115; these read ITDP…LLIF and CFLL…LGYK. A Y1 region spans residues 2144 to 2234; that stretch reads SFVRHVLFGC…ITKTNVQPTG (91 aa). One can recognise a CoV Nsp3 Y domain in the interval 2144-2483; that stretch reads SFVRHVLFGC…PATSIVAKQG (340 aa). Zn(2+) is bound by residues histidine 2148, cysteine 2153, cysteine 2158, cysteine 2161, cysteine 2194, histidine 2197, cysteine 2201, and cysteine 2204. The tract at residues 2148-2161 is ZF1; that stretch reads HVLFGCENPDCIAC. The ZF2 stretch occupies residues 2194 to 2204; the sequence is CKKHRFFCVDC. Positions 2235–2324 are Y2; the sequence is PAYVMIDKVE…LVDSELLSTL (90 aa). Positions 2235–2483 are coV-Y; sequence PAYVMIDKVE…PATSIVAKQG (249 aa). The Y3 stretch occupies residues 2325-2381; sequence SVDFNGVLHKAYIDVLRNSFGKDLNANMSLAECKRALGLSISDHEFTSAISNAHRCD. Positions 2382–2483 are Y4; sequence VLLSDLSFNN…PATSIVAKQG (102 aa). Helical transmembrane passes span 2491 to 2511, 2731 to 2751, 2755 to 2775, 2782 to 2802, 2809 to 2829, and 2834 to 2854; these read LTWL…LCFF, LWNL…VAAM, ILLN…VTKF, LSVG…SYIV, MIAY…AWIW, and LIAY…LAML. Residues 2491 to 2854 form an HD2 region; it reads LTWLWLLCGL…LCAWYFLAML (364 aa). Positions 2870–2965 constitute a Nsp4C domain; that stretch reads LFEGDKFVGT…PTVSYGSTLQ (96 aa). The Peptidase C30 domain occupies 2966-3267; sequence AGLRKMAQPS…VKQMFGVNLQ (302 aa). Active-site for 3CL-PRO activity residues include histidine 3006 and cysteine 3109. 7 helical membrane passes run 3281 to 3301, 3304 to 3324, 3328 to 3348, 3367 to 3387, 3401 to 3421, 3422 to 3442, and 3467 to 3487; these read FAGF…TIWV, GFLT…TFVV, VLFL…QNCA, VMQM…VALL, CTYL…YDYV, SLLV…AIIF, and LLFY…LYWI. Positions 3281–3487 are HD3; it reads FAGFFVMFWA…CMYYGLLYWI (207 aa). The 83-residue stretch at 3547–3629 folds into the RdRp Nsp7 cofactor domain; the sequence is SKLTDLKCTN…SYFENDSILQ (83 aa). One can recognise a RdRp Nsp8 cofactor domain in the interval 3630-3824; that stretch reads SVASSFVGMP…LTCERVVKLQ (195 aa). Residues 3825–3933 form the Nsp9 ssRNA-binding domain; the sequence is NNEIMPGKMK…GYIGATVRLQ (109 aa). The ExoN/MTase coactivator domain occupies 3934 to 4072; that stretch reads AGKQTEFVSN…DRTAIQSFDN (139 aa). Positions 4007, 4010, 4016, 4023, 4049, 4052, 4060, and 4062 each coordinate Zn(2+). 2 zinc fingers span residues 4007 to 4023 and 4049 to 4062; these read CIYC…DGFC and CKVC…GCTC.

It belongs to the coronaviruses polyprotein 1ab family. As to quaternary structure, 3CL-PRO exists as monomer and homodimer. Eight copies of nsp7 and eight copies of nsp8 assemble to form a heterohexadecamer. Nsp9 is a dimer. Nsp10 forms a dodecamer. In terms of processing, specific enzymatic cleavages in vivo by its own proteases yield mature proteins. 3CL-PRO and PL-PRO proteinases are autocatalytically processed.

The protein resides in the host membrane. It localises to the host cytoplasm. It is found in the host perinuclear region. The catalysed reaction is Thiol-dependent hydrolysis of ester, thioester, amide, peptide and isopeptide bonds formed by the C-terminal Gly of ubiquitin (a 76-residue protein attached to proteins as an intracellular targeting signal).. In terms of biological role, the papain-like proteinase 1 (PLP1) and papain-like proteinase 2 (PLP2) are responsible for the cleavages located at the N-terminus of the replicase polyprotein. In addition, PLP2 possesses a deubiquitinating/deISGylating activity and processes both 'Lys-48'- and 'Lys-63'-linked polyubiquitin chains from cellular substrates. PLP2 also antagonizes innate immune induction of type I interferon by blocking the nuclear translocation of host IRF-3. Responsible for the majority of cleavages as it cleaves the C-terminus of replicase polyprotein at 11 sites. Recognizes substrates containing the core sequence [ILMVF]-Q-|-[SGACN]. Inhibited by the substrate-analog Cbz-Val-Asn-Ser-Thr-Leu-Gln-CMK. Also contains an ADP-ribose-1''-phosphate (ADRP)-binding function. Its function is as follows. Nsp7-nsp8 hexadecamer may possibly confer processivity to the polymerase, maybe by binding to dsRNA or by producing primers utilized by the latter. Functionally, nsp9 is a ssRNA-binding protein. This Homo sapiens (Human) protein is Replicase polyprotein 1a.